The chain runs to 606 residues: NADH-ubiquinone oxidoreductase chain 5 (606 aa).

15 helical membrane passes run 1–21 (MNMF…PIIM), 43–63 (AFMI…ETIF), 87–107 (MIFV…SMWY), 117–137 (FFKY…ANNM), 140–160 (LFIG…WWYG), 171–191 (AVLY…WFLL), 201–221 (IFIT…LAAT), 241–261 (TPVS…FLLI), 273–293 (IQTL…ICAL), 310–330 (LGLM…LHIC), 365–385 (VLPF…GMPF), 409–429 (LLIT…IMFF), 457–477 (LLIG…PTTI), 488–508 (MTAL…NLTT), and 582–602 (GLIK…LLIL).

Belongs to the complex I subunit 5 family. Core subunit of respiratory chain NADH dehydrogenase (Complex I) which is composed of 45 different subunits.

It localises to the mitochondrion inner membrane. It carries out the reaction a ubiquinone + NADH + 5 H(+)(in) = a ubiquinol + NAD(+) + 4 H(+)(out). In terms of biological role, core subunit of the mitochondrial membrane respiratory chain NADH dehydrogenase (Complex I) which catalyzes electron transfer from NADH through the respiratory chain, using ubiquinone as an electron acceptor. Essential for the catalytic activity and assembly of complex I. The sequence is that of NADH-ubiquinone oxidoreductase chain 5 (MT-ND5) from Canis lupus familiaris (Dog).